Reading from the N-terminus, the 156-residue chain is Small ribosomal subunit protein uS7 (156 aa).

The protein belongs to the universal ribosomal protein uS7 family. In terms of assembly, part of the 30S ribosomal subunit. Contacts proteins S9 and S11.

In terms of biological role, one of the primary rRNA binding proteins, it binds directly to 16S rRNA where it nucleates assembly of the head domain of the 30S subunit. Is located at the subunit interface close to the decoding center, probably blocks exit of the E-site tRNA. This Lactobacillus acidophilus (strain ATCC 700396 / NCK56 / N2 / NCFM) protein is Small ribosomal subunit protein uS7.